A 516-amino-acid polypeptide reads, in one-letter code: Probable inactive beta-glucosidase 14 (516 aa).

An N-terminal signal peptide occupies residues 1 to 23 (MAAAWLVVLLTVHRLLHLSGVSA). Residues Gln-43, His-145, and 190–191 (NQ) contribute to the a beta-D-glucoside site. The N-linked (GlcNAc...) asparagine glycan is linked to Asn-193. A disulfide bridge connects residues Cys-210 and Cys-217. Asn-221 and Asn-270 each carry an N-linked (GlcNAc...) asparagine glycan. Tyr-334 is an a beta-D-glucoside binding site. Cys-342 and Cys-347 are joined by a disulfide. Glu-405 serves as a coordination point for a beta-D-glucoside. Glu-405 serves as the catalytic Nucleophile. 2 N-linked (GlcNAc...) asparagine glycosylation sites follow: Asn-415 and Asn-423. A beta-D-glucoside-binding positions include Trp-454, 461 to 462 (EW), and Phe-470.

Belongs to the glycosyl hydrolase 1 family. In terms of tissue distribution, expressed in flowers and endosperm.

In Oryza sativa subsp. japonica (Rice), this protein is Probable inactive beta-glucosidase 14.